A 306-amino-acid chain; its full sequence is Putative lipid kinase Sca_1050 (306 aa).

In terms of domain architecture, DAGKc spans 3-139; that stretch reads QHFHRGILFY…FDVLKVNDTY (137 aa). Residues serine 44, 74–80, and threonine 101 each bind ATP; that span reads GDGTVNE. 3 residues coordinate Mg(2+): serine 220, aspartate 223, and glutamate 225. Catalysis depends on glutamate 281, which acts as the Proton acceptor.

The protein belongs to the diacylglycerol/lipid kinase family. The cofactor is Mg(2+).

May catalyze the ATP-dependent phosphorylation of lipids other than diacylglycerol (DAG). This chain is Putative lipid kinase Sca_1050, found in Staphylococcus carnosus (strain TM300).